The chain runs to 599 residues: Sulfite reductase [NADPH] flavoprotein alpha-component (599 aa).

The Flavodoxin-like domain occupies 64 to 202 (ITIISASQTG…AASEWRARVV (139 aa)). Residues 70-75 (SQTGNA), 117-120 (STQG), and 153-162 (LGDSSYEFFC) contribute to the FMN site. Residues 234 to 448 (DAPLVASLSV…IEHNDNFRLP (215 aa)) form the FAD-binding FR-type domain. FAD is bound by residues Thr-322, Ala-356, 386–389 (RLYS), 404–406 (TVG), Tyr-410, and 419–422 (GGAS). Residues 519 to 520 (SR), 525 to 529 (KVYVQ), and Asp-561 each bind NADP(+). An FAD-binding site is contributed by Tyr-599.

The protein belongs to the NADPH-dependent sulphite reductase flavoprotein subunit CysJ family. In the N-terminal section; belongs to the flavodoxin family. It in the C-terminal section; belongs to the flavoprotein pyridine nucleotide cytochrome reductase family. In terms of assembly, alpha(8)-beta(8). The alpha component is a flavoprotein, the beta component is a hemoprotein. Requires FAD as cofactor. FMN serves as cofactor.

The catalysed reaction is hydrogen sulfide + 3 NADP(+) + 3 H2O = sulfite + 3 NADPH + 4 H(+). Its pathway is sulfur metabolism; hydrogen sulfide biosynthesis; hydrogen sulfide from sulfite (NADPH route): step 1/1. Functionally, component of the sulfite reductase complex that catalyzes the 6-electron reduction of sulfite to sulfide. This is one of several activities required for the biosynthesis of L-cysteine from sulfate. The flavoprotein component catalyzes the electron flow from NADPH -&gt; FAD -&gt; FMN to the hemoprotein component. The chain is Sulfite reductase [NADPH] flavoprotein alpha-component from Shigella dysenteriae serotype 1 (strain Sd197).